A 513-amino-acid polypeptide reads, in one-letter code: ATP synthase subunit alpha (513 aa).

Residue 169-176 (GDRQTGKT) participates in ATP binding.

This sequence belongs to the ATPase alpha/beta chains family. As to quaternary structure, F-type ATPases have 2 components, CF(1) - the catalytic core - and CF(0) - the membrane proton channel. CF(1) has five subunits: alpha(3), beta(3), gamma(1), delta(1), epsilon(1). CF(0) has three main subunits: a(1), b(2) and c(9-12). The alpha and beta chains form an alternating ring which encloses part of the gamma chain. CF(1) is attached to CF(0) by a central stalk formed by the gamma and epsilon chains, while a peripheral stalk is formed by the delta and b chains.

The protein resides in the cell inner membrane. The catalysed reaction is ATP + H2O + 4 H(+)(in) = ADP + phosphate + 5 H(+)(out). Functionally, produces ATP from ADP in the presence of a proton gradient across the membrane. The alpha chain is a regulatory subunit. This chain is ATP synthase subunit alpha, found in Ruegeria sp. (strain TM1040) (Silicibacter sp.).